Consider the following 114-residue polypeptide: Chaperonin GroEL (114 aa).

22–26 (DGTTT) provides a ligand contact to ATP.

Belongs to the chaperonin (HSP60) family. Forms a cylinder of 14 subunits composed of two heptameric rings stacked back-to-back. Interacts with the co-chaperonin GroES.

The protein localises to the cytoplasm. It carries out the reaction ATP + H2O + a folded polypeptide = ADP + phosphate + an unfolded polypeptide.. Its function is as follows. Together with its co-chaperonin GroES, plays an essential role in assisting protein folding. The GroEL-GroES system forms a nano-cage that allows encapsulation of the non-native substrate proteins and provides a physical environment optimized to promote and accelerate protein folding. The protein is Chaperonin GroEL of Mycobacterium ulcerans.